A 197-amino-acid chain; its full sequence is Ribonuclease HII (197 aa).

Residues 4 to 197 (IWVCGVDEAG…VRKALESVAS (194 aa)) form the RNase H type-2 domain. A divalent metal cation-binding residues include D10, E11, and D106.

The protein belongs to the RNase HII family. It depends on Mn(2+) as a cofactor. Requires Mg(2+) as cofactor.

Its subcellular location is the cytoplasm. The catalysed reaction is Endonucleolytic cleavage to 5'-phosphomonoester.. Endonuclease that specifically degrades the RNA of RNA-DNA hybrids. This is Ribonuclease HII from Polynucleobacter necessarius subsp. necessarius (strain STIR1).